We begin with the raw amino-acid sequence, 178 residues long: 2-C-methyl-D-erythritol 2,4-cyclodiphosphate synthase (178 aa).

Residues D24, H26, and H61 each coordinate a divalent metal cation. 24-26 provides a ligand contact to 4-CDP-2-C-methyl-D-erythritol 2-phosphate; sequence DSH. 150 to 153 provides a ligand contact to 4-CDP-2-C-methyl-D-erythritol 2-phosphate; sequence TSGE.

It belongs to the IspF family. Homotrimer. A divalent metal cation is required as a cofactor.

The catalysed reaction is 4-CDP-2-C-methyl-D-erythritol 2-phosphate = 2-C-methyl-D-erythritol 2,4-cyclic diphosphate + CMP. It functions in the pathway isoprenoid biosynthesis; isopentenyl diphosphate biosynthesis via DXP pathway; isopentenyl diphosphate from 1-deoxy-D-xylulose 5-phosphate: step 4/6. Functionally, involved in the biosynthesis of isopentenyl diphosphate (IPP) and dimethylallyl diphosphate (DMAPP), two major building blocks of isoprenoid compounds. Catalyzes the conversion of 4-diphosphocytidyl-2-C-methyl-D-erythritol 2-phosphate (CDP-ME2P) to 2-C-methyl-D-erythritol 2,4-cyclodiphosphate (ME-CPP) with a corresponding release of cytidine 5-monophosphate (CMP). The protein is 2-C-methyl-D-erythritol 2,4-cyclodiphosphate synthase of Chlamydia trachomatis serovar A (strain ATCC VR-571B / DSM 19440 / HAR-13).